We begin with the raw amino-acid sequence, 294 residues long: MSQFSCVGLIGRLDSDNAAYSLRRLISFLAKQNIEVMLDEETAEFYTENELEIVSRETLAKRCDLIIVVGGDGSLLSAARAFAGKPVKLLGINRGRLGFLTDISPDEIEYKVGEVLAGKYVSESRFLLHSQLYRGEELISEAVALNDVVMHPGQFIRMIEFELYINDEFVYRQRSDGLIISSPTGATAYALSCGGPIMHPSLDAIVLVPMNPHTLSSRPIVVHGSSRIRLLIAKDNHLSPHITNDGQTHVVTKPGDEVVVTKSPDLLELIHPTDHNFYETCRSKLGWASHTGGC.

Asp-72 serves as the catalytic Proton acceptor. Residues 72–73 (DG), 146–147 (ND), Arg-157, Arg-174, Asp-176, 187–192 (TAYALS), and Gln-247 each bind NAD(+).

It belongs to the NAD kinase family. A divalent metal cation serves as cofactor.

The protein resides in the cytoplasm. The enzyme catalyses NAD(+) + ATP = ADP + NADP(+) + H(+). Involved in the regulation of the intracellular balance of NAD and NADP, and is a key enzyme in the biosynthesis of NADP. Catalyzes specifically the phosphorylation on 2'-hydroxyl of the adenosine moiety of NAD to yield NADP. The sequence is that of NAD kinase from Saccharophagus degradans (strain 2-40 / ATCC 43961 / DSM 17024).